Here is a 429-residue protein sequence, read N- to C-terminus: GTPase Obg (429 aa).

One can recognise an Obg domain in the interval 1 to 158 (MFADSAKIFI…LNVTLELKVI (158 aa)). The OBG-type G domain occupies 159-333 (ADVGLVGFPN…LLYYVSDLLK (175 aa)). GTP-binding positions include 165–172 (GFPNVGKS), 190–194 (FTTLN), 212–215 (DIPG), 282–285 (NKTD), and 314–316 (SAV). Positions 172 and 192 each coordinate Mg(2+). An OCT domain is found at 350 to 429 (ENLVMSEPYT…MYGLEFDYYK (80 aa)).

Belongs to the TRAFAC class OBG-HflX-like GTPase superfamily. OBG GTPase family. In terms of assembly, monomer. Requires Mg(2+) as cofactor.

It localises to the cytoplasm. In terms of biological role, an essential GTPase which binds GTP, GDP and possibly (p)ppGpp with moderate affinity, with high nucleotide exchange rates and a fairly low GTP hydrolysis rate. Plays a role in control of the cell cycle, stress response, ribosome biogenesis and in those bacteria that undergo differentiation, in morphogenesis control. The chain is GTPase Obg from Lachnoclostridium phytofermentans (strain ATCC 700394 / DSM 18823 / ISDg) (Clostridium phytofermentans).